A 623-amino-acid polypeptide reads, in one-letter code: Endoglucanase 12 (623 aa).

Topologically, residues methionine 1 to leucine 73 are cytoplasmic. A helical; Signal-anchor for type II membrane protein membrane pass occupies residues leucine 74–isoleucine 94. The Extracellular segment spans residues alanine 95–proline 623. The active-site Nucleophile is the aspartate 166. N-linked (GlcNAc...) asparagine glycans are attached at residues asparagine 217, asparagine 236, asparagine 324, asparagine 345, asparagine 408, and asparagine 425. Active-site residues include histidine 513, aspartate 561, and glutamate 570.

Belongs to the glycosyl hydrolase 9 (cellulase E) family. Ubiquitous.

It localises to the membrane. It carries out the reaction Endohydrolysis of (1-&gt;4)-beta-D-glucosidic linkages in cellulose, lichenin and cereal beta-D-glucans.. The protein is Endoglucanase 12 (GLU3) of Oryza sativa subsp. japonica (Rice).